Here is a 353-residue protein sequence, read N- to C-terminus: Photosystem II D2 protein (353 aa).

At threonine 2 the chain carries N-acetylthreonine. Threonine 2 bears the Phosphothreonine mark. A helical transmembrane segment spans residues 41-61 (CAYFALGGWFTGTTFVTSWYT). Histidine 118 contributes to the chlorophyll a binding site. A helical transmembrane segment spans residues 125-141 (GFMLRQFELARSVQLRP). The pheophytin a site is built by glutamine 130 and asparagine 143. Residues 153–166 (VFVSVFLIYPLGQS) form a helical membrane-spanning segment. Histidine 198 is a chlorophyll a binding site. A helical transmembrane segment spans residues 208-228 (AALLCAIHGATVENTLFEDGD). The a plastoquinone site is built by histidine 215 and phenylalanine 262. Position 215 (histidine 215) interacts with Fe cation. Histidine 269 contributes to the Fe cation binding site. Residues 279 to 295 (GLWMSAIGVVGLALNLR) form a helical membrane-spanning segment.

This sequence belongs to the reaction center PufL/M/PsbA/D family. PSII is composed of 1 copy each of membrane proteins PsbA, PsbB, PsbC, PsbD, PsbE, PsbF, PsbH, PsbI, PsbJ, PsbK, PsbL, PsbM, PsbT, PsbX, PsbY, PsbZ, Psb30/Ycf12, at least 3 peripheral proteins of the oxygen-evolving complex and a large number of cofactors. It forms dimeric complexes. The D1/D2 heterodimer binds P680, chlorophylls that are the primary electron donor of PSII, and subsequent electron acceptors. It shares a non-heme iron and each subunit binds pheophytin, quinone, additional chlorophylls, carotenoids and lipids. There is also a Cl(-1) ion associated with D1 and D2, which is required for oxygen evolution. The PSII complex binds additional chlorophylls, carotenoids and specific lipids. is required as a cofactor.

Its subcellular location is the plastid. It is found in the chloroplast thylakoid membrane. It carries out the reaction 2 a plastoquinone + 4 hnu + 2 H2O = 2 a plastoquinol + O2. Photosystem II (PSII) is a light-driven water:plastoquinone oxidoreductase that uses light energy to abstract electrons from H(2)O, generating O(2) and a proton gradient subsequently used for ATP formation. It consists of a core antenna complex that captures photons, and an electron transfer chain that converts photonic excitation into a charge separation. The D1/D2 (PsbA/PsbD) reaction center heterodimer binds P680, the primary electron donor of PSII as well as several subsequent electron acceptors. D2 is needed for assembly of a stable PSII complex. This Phalaenopsis aphrodite subsp. formosana (Moth orchid) protein is Photosystem II D2 protein.